Consider the following 246-residue polypeptide: MEFNKAQNIIGLRVLNDNVIWLWEKDKSVVVIDPAIHEPVIRYIDENNLYIKAILQTHHHSDHIGGTKYLIERWPNVQVIASSKDKKRIPFQNISVEDGETLNILGEEIKIIEVLGHTNSHIAFFVNGESPVLFIGDTLFSGGCGRIFEGTYQQMYSSLERIKSLPKNTLIYCAHEYTKANLLWALNLKPKDQDIKNKLLQVEKKLSINELTIPFLLDEEMKINLFLRAKNLKEFTFLRENKDLWV.

The Zn(2+) site is built by His58, His60, Asp62, His63, His117, Asp137, and His175.

This sequence belongs to the metallo-beta-lactamase superfamily. Glyoxalase II family. In terms of assembly, monomer. Zn(2+) is required as a cofactor.

It carries out the reaction an S-(2-hydroxyacyl)glutathione + H2O = a 2-hydroxy carboxylate + glutathione + H(+). It participates in secondary metabolite metabolism; methylglyoxal degradation; (R)-lactate from methylglyoxal: step 2/2. Functionally, thiolesterase that catalyzes the hydrolysis of S-D-lactoyl-glutathione to form glutathione and D-lactic acid. The chain is Hydroxyacylglutathione hydrolase from Prochlorococcus marinus (strain MIT 9312).